The following is a 111-amino-acid chain: MEARAIARYVRISPRKVRLVLNLIRGKHVDEALTILRFTPKRASGIVAKVLKSAIANAENNHGMNRDNLYVAKAVADEGPTMKRVFPRAMGRADIMRKRTSHITIVVKEKE.

Belongs to the universal ribosomal protein uL22 family. Part of the 50S ribosomal subunit.

This protein binds specifically to 23S rRNA; its binding is stimulated by other ribosomal proteins, e.g. L4, L17, and L20. It is important during the early stages of 50S assembly. It makes multiple contacts with different domains of the 23S rRNA in the assembled 50S subunit and ribosome. Its function is as follows. The globular domain of the protein is located near the polypeptide exit tunnel on the outside of the subunit, while an extended beta-hairpin is found that lines the wall of the exit tunnel in the center of the 70S ribosome. In Thermoanaerobacter pseudethanolicus (strain ATCC 33223 / 39E) (Clostridium thermohydrosulfuricum), this protein is Large ribosomal subunit protein uL22.